We begin with the raw amino-acid sequence, 373 residues long: MTAEIQQPPSQPPAQSSPMSAATDKHGGQPSVMESANCATKTKKTNAGIRRPEKPPYSYIALIVMAIQSSPTKRLTLSEIYQFLQSRFPFFRGSYQGWKNSVRHNLSLNECFIKLPKGLGRPGKGHYWTIDPASEFMFEEGSFRRRPRGFRRKCQALKPMYSMMNGLGFNHIPETYSFQGASGTIACPPNSLSLDSGIGMMNGHLPSNVDGMGLSGHPVSHIAANGGHSYMGSCTGSSGGDYSHHDSGSPLLGGGGVMEPHSVYSSPASAWAPSASTPYIKQQPLSPCNSAANPLSSSLSSHSLDQSYLHQNSHNTASELQGIPRYHSQSPSMNDRKEFVFSFNAMASSSMHSGSGSYYHQQVGYQDIKPCVM.

Residues 1-51 are disordered; it reads MTAEIQQPPSQPPAQSSPMSAATDKHGGQPSVMESANCATKTKKTNAGIRR. The segment covering 13 to 22 has biased composition (low complexity); sequence PAQSSPMSAA. The fork-head DNA-binding region spans 54–148; it reads KPPYSYIALI…EEGSFRRRPR (95 aa). Disordered regions lie at residues 236–255 and 283–306; these read GSSG…LGGG and QPLS…SLDQ. Over residues 286–306 the composition is skewed to low complexity; it reads SPCNSAANPLSSSLSSHSLDQ.

Its subcellular location is the nucleus. Its function is as follows. Probable transcription factor. Required for smooth muscle (visceral mesoderm) differentiation during gut development. Also required for normal proliferation of the lateral plate mesoderm. Acts as a downstream mediator of bmp4-signaling. This is Forkhead box protein F1 from Xenopus tropicalis (Western clawed frog).